A 180-amino-acid chain; its full sequence is Signal peptidase complex subunit 3 (180 aa).

Topologically, residues 1–11 are cytoplasmic; sequence MNTVLSRANSL. The chain crosses the membrane as a helical; Signal-anchor for type II membrane protein span at residues 12–32; that stretch reads FAFSLSVMAALTFGCFITTAF. Residues 33-180 are Lumenal-facing; that stretch reads KERSVPVSIA…PDTYETTKSY (148 aa). An N-linked (GlcNAc...) asparagine glycan is attached at N141.

The protein belongs to the SPCS3 family. As to quaternary structure, component of the signal peptidase complex paralog A (SPC-A) composed of a catalytic subunit SEC11A and three accessory subunits SPCS1, SPCS2 and SPCS3. Component of the signal peptidase complex paralog C (SPC-C) composed of a catalytic subunit SEC11C and three accessory subunits SPCS1, SPCS2 and SPCS3. The complex induces a local thinning of the ER membrane which is used to measure the length of the signal peptide (SP) h-region of protein substrates. This ensures the selectivity of the complex towards h-regions shorter than 18-20 amino acids. As to expression, expressed in hen oviduct (at protein level).

The protein resides in the endoplasmic reticulum membrane. Its function is as follows. Essential component of the signal peptidase complex (SPC) which catalyzes the cleavage of N-terminal signal sequences from nascent proteins as they are translocated into the lumen of the endoplasmic reticulum. Essential for the SPC catalytic activity, possibly by stabilizing and positioning the active center of the complex close to the lumenal surface. This Gallus gallus (Chicken) protein is Signal peptidase complex subunit 3.